Here is a 103-residue protein sequence, read N- to C-terminus: Secreted Ly-6/uPAR-related protein 1 (103 aa).

The first 22 residues, 1–22 (MASRWAVQLLLVAAWSMGCGEA), serve as a signal peptide directing secretion. One can recognise a UPAR/Ly6 domain in the interval 24–73 (KCYTCKEPMTSASCRTITRCKPEDTACMTTLVTVEAEYPFNQSPVVTRSC). Intrachain disulfides connect cysteine 25-cysteine 50, cysteine 28-cysteine 37, cysteine 43-cysteine 73, cysteine 77-cysteine 93, and cysteine 94-cysteine 99.

As to quaternary structure, homodimer. Interacts with PLAU. Interacts with CHRNA7. In terms of tissue distribution, granulocytes. Expressed in skin. Predominantly expressed in the granular layer of skin, notably the acrosyringium. Identified in several biological fluids such as sweat, saliva, tears, plasma and urine.

Its subcellular location is the secreted. Its function is as follows. Has an antitumor activity. Was found to be a marker of late differentiation of the skin. Implicated in maintaining the physiological and structural integrity of the keratinocyte layers of the skin. In vitro down-regulates keratinocyte proliferation; the function may involve the proposed role as modulator of nicotinic acetylcholine receptors (nAChRs) activity. In vitro inhibits alpha-7-dependent nAChR currents in an allosteric manner. In T cells may be involved in regulation of intracellular Ca(2+) signaling. Seems to have an immunomodulatory function in the cornea. The function may implicate a possible role as a scavenger receptor for PLAU thereby blocking PLAU-dependent functions of PLAUR such as in cell migration and proliferation. This chain is Secreted Ly-6/uPAR-related protein 1 (SLURP1), found in Homo sapiens (Human).